A 1176-amino-acid polypeptide reads, in one-letter code: MDFRANLQRQVKPKTLSEEERKVHGPQQVDFRSVLAKKGTPKTPVPEKVPPPKPATPDFRSVLGSKKKLPTENGSNNTEALNAKAAEGLKPVGNAQPSGFLKPVGNAKLADTPKPLSSTKPAETPKPLGNVKPAETPKPLGSTKPAETPKPLGSTKPAETPKPLGNVKPAETPKPLGNIKPTETPKPLGSTKPAETPKPLGSTKPAETPKPLGNVKPAETPKPLGNVKPAETPKPLGNVKPAETPKPVSNAKPAETLKPVGNAKPAETPKPLSNVKPAETPKLVGNAKPAETSKPLDNAKPAEAPKPLGNAKPAEIPKPTGKEELKKEIKNDVNCKKGHAGATDSEKRPESRGTAPTFEEKLQDLHVAEGQKLLLQCRVSSDPPATITWTLNGKTLKTTKFIVLSQEGSLCSVSIEKALPEDRGLYKCVAKNSAGQAESSCQVTVDVPDAPTSENAKAPEMKARRPKSSLPPVLGTESDATVKKKPAPKTPPKAAMPPQIIQFPEDQKVRAGESVELFGKVAGTQPITCTWMKFRKQIQDSEHIKVENSEQGSKLTIRAARQEHCGCYTLLVENKLGSRQAQVNLTVVDKPDPPAGTPCASDIRSSSLTLSWYGSSYDGGSAVQSYSVEIWDSVDKTWKELATCRSTSFNVQDLLPDREYKFRVRAINVYGTSEPSQESELTALGEKPEEEPKDEVEVSDDDEKEPEVDYRTVTVNTEQKVSDFYDIEERLGSGKFGQVFRLVEKKTGKIWAGKFFKAYSAKEKENIRQEISIMNCLHHPKLVQCVDAFEEKANIVMVLEIVSGGELFERIIDEDFELTERECIKYMKQISEGVEYIHKQGIVHLDLKPENIMCVNKTGTRIKLIDFGLARRLENAGSLKVLFGTPEFVAPEVINYEPIGYATDMWSIGVICYILVSGLSPFMGDNDNETLANVTSATWDFDDEAFDEISDDAKDFISNLLKKDMKNRLNCTQCLQHPWLMKDTKNMEAKKLSKDRMKKYMARRKWQKTGNAVRAIGRLSSMAMISGLSGRKSSTGSPTSPLNAEKLESEDVSQAFLEAVAEEKPHVKPYFSKTIRDLEVVEGSAARFDCKIEGYPDPEVVWFKDDQSIRESRHFQIDYDEDGNCSLIISDVCGDDDAKYTCKAVNSLGEATCTAELIVETMEEGEGEGGEEEEEE.

The tract at residues 1–41 is actin-binding (calcium/calmodulin-sensitive); sequence MDFRANLQRQVKPKTLSEEERKVHGPQQVDFRSVLAKKGTP. A disordered region spans residues 1 to 354; that stretch reads MDFRANLQRQ…SEKRPESRGT (354 aa). The tract at residues 26 to 41 is calmodulin-binding; that stretch reads PQQVDFRSVLAKKGTP. Pro residues predominate over residues 43 to 55; the sequence is TPVPEKVPPPKPA. Repeat copies occupy residues 100-111, 112-123, 124-135, 136-147, 148-159, 160-171, 172-183, 184-195, 196-207, 208-219, 220-231, 232-243, 244-255, 256-267, 268-279, and 280-291. The 16 X 12 AA tandem repeats stretch occupies residues 100–291; the sequence is FLKPVGNAKL…KLVGNAKPAE (192 aa). Ser202 carries the phosphoserine modification. Residues 319 to 721 are actin-binding (calcium/calmodulin-insensitive); sequence PTGKEELKKE…TVTVNTEQKV (403 aa). Positions 320 to 335 are enriched in basic and acidic residues; it reads TGKEELKKEIKNDVNC. In terms of domain architecture, Ig-like C2-type 1 spans 356–444; it reads PTFEEKLQDL…GQAESSCQVT (89 aa). The cysteines at positions 377 and 428 are disulfide-linked. A disordered region spans residues 448–497; it reads PDAPTSENAKAPEMKARRPKSSLPPVLGTESDATVKKKPAPKTPPKAAMP. The region spanning 498-586 is the Ig-like C2-type 2 domain; it reads PQIIQFPEDQ…GSRQAQVNLT (89 aa). Positions 594–686 constitute a Fibronectin type-III domain; that stretch reads PAGTPCASDI…QESELTALGE (93 aa). Positions 673–707 are disordered; that stretch reads SEPSQESELTALGEKPEEEPKDEVEVSDDDEKEPE. Residues 688–706 are compositionally biased toward acidic residues; the sequence is PEEEPKDEVEVSDDDEKEP. Ser699 carries the post-translational modification Phosphoserine. Tyr710 carries the phosphotyrosine; by ABL1 modification. In terms of domain architecture, Protein kinase spans 725 to 980; that stretch reads YDIEERLGSG…CTQCLQHPWL (256 aa). Residues 731–739 and Lys754 contribute to the ATP site; that span reads LGSGKFGQV. Tyr836 carries the post-translational modification Phosphotyrosine; by ABL1. Asp846 acts as the Proton acceptor in catalysis. Tyr896 is subject to Phosphotyrosine; by ABL1. The calmodulin-binding stretch occupies residues 972–1035; it reads TQCLQHPWLM…SGLSGRKSST (64 aa). Residues Ser1020, Ser1021, Ser1033, Ser1034, and Ser1037 each carry the phosphoserine modification. At Thr1039 the chain carries Phosphothreonine. Ser1040 carries the post-translational modification Phosphoserine. One can recognise an Ig-like C2-type 3 domain in the interval 1069–1158; the sequence is PYFSKTIRDL…GEATCTAELI (90 aa). Cysteines 1090 and 1142 form a disulfide.

Belongs to the protein kinase superfamily. CAMK Ser/Thr protein kinase family. In terms of assembly, all isoforms including Telokin bind calmodulin. Interacts with SVIL. Interacts with CTTN; this interaction is reduced during thrombin-induced endothelial cell (EC) contraction but is promoted by the barrier-protective agonist sphingosine 1-phosphate (S1P) within lamellipodia. A complex made of ABL1, CTTN and MYLK regulates cortical actin-based cytoskeletal rearrangement critical to sphingosine 1-phosphate (S1P)-mediated endothelial cell (EC) barrier enhancement. Binds to NAA10/ARD1 and PTK2B/PYK2. Mg(2+) serves as cofactor. It depends on Ca(2+) as a cofactor. In terms of processing, the C-terminus is deglutamylated by AGTPBP1/CCP1, AGBL1/CCP4 and AGBL4/CCP6, leading to the formation of Myosin light chain kinase, smooth muscle, deglutamylated form. The consequences of C-terminal deglutamylation are unknown. Post-translationally, can probably be down-regulated by phosphorylation. Tyrosine phosphorylation by ABL1 increases kinase activity, reverses MLCK-mediated inhibition of Arp2/3-mediated actin polymerization, and enhances CTTN-binding. Phosphorylation by SRC promotes CTTN binding.

It localises to the cytoplasm. Its subcellular location is the cell projection. It is found in the lamellipodium. The protein localises to the cleavage furrow. The protein resides in the cytoskeleton. It localises to the stress fiber. The catalysed reaction is L-seryl-[myosin light chain] + ATP = O-phospho-L-seryl-[myosin light chain] + ADP + H(+). The enzyme catalyses L-threonyl-[myosin light chain] + ATP = O-phospho-L-threonyl-[myosin light chain] + ADP + H(+). Functionally, calcium/calmodulin-dependent myosin light chain kinase implicated in smooth muscle contraction via phosphorylation of myosin light chains (MLC). Also regulates actin-myosin interaction through a non-kinase activity. Phosphorylates PTK2B/PYK2 and myosin light-chains. Involved in the inflammatory response (e.g. apoptosis, vascular permeability, leukocyte diapedesis), cell motility and morphology, airway hyperreactivity and other activities relevant to asthma. Required for tonic airway smooth muscle contraction that is necessary for physiological and asthmatic airway resistance. Necessary for gastrointestinal motility. Implicated in the regulation of endothelial as well as vascular permeability, probably via the regulation of cytoskeletal rearrangements. In the nervous system it has been shown to control the growth initiation of astrocytic processes in culture and to participate in transmitter release at synapses formed between cultured sympathetic ganglion cells. Critical participant in signaling sequences that result in fibroblast apoptosis. Plays a role in the regulation of epithelial cell survival. Required for epithelial wound healing, especially during actomyosin ring contraction during purse-string wound closure. Mediates RhoA-dependent membrane blebbing. Triggers TRPC5 channel activity in a calcium-dependent signaling, by inducing its subcellular localization at the plasma membrane. Promotes cell migration (including tumor cells) and tumor metastasis. PTK2B/PYK2 activation by phosphorylation mediates ITGB2 activation and is thus essential to trigger neutrophil transmigration during acute lung injury (ALI). May regulate optic nerve head astrocyte migration. Probably involved in mitotic cytoskeletal regulation. Regulates tight junction probably by modulating ZO-1 exchange in the perijunctional actomyosin ring. Mediates burn-induced microvascular barrier injury; triggers endothelial contraction in the development of microvascular hyperpermeability by phosphorylating MLC. Essential for intestinal barrier dysfunction. Mediates Giardia spp.-mediated reduced epithelial barrier function during giardiasis intestinal infection via reorganization of cytoskeletal F-actin and tight junctional ZO-1. Necessary for hypotonicity-induced Ca(2+) entry and subsequent activation of volume-sensitive organic osmolyte/anion channels (VSOAC) in cervical cancer cells. The sequence is that of Myosin light chain kinase, smooth muscle (MYLK) from Bos taurus (Bovine).